The following is a 148-amino-acid chain: Large-conductance mechanosensitive channel (148 aa).

Transmembrane regions (helical) follow at residues 21 to 41 (IDLA…DSVV), 45 to 65 (IMPL…KFLV), and 92 to 112 (GNFL…FIIV).

It belongs to the MscL family. Homopentamer.

It is found in the cell inner membrane. Channel that opens in response to stretch forces in the membrane lipid bilayer. May participate in the regulation of osmotic pressure changes within the cell. This chain is Large-conductance mechanosensitive channel, found in Bordetella petrii (strain ATCC BAA-461 / DSM 12804 / CCUG 43448).